The sequence spans 695 residues: F-box only protein 34 (695 aa).

3 disordered regions span residues 239–275, 316–373, and 472–524; these read GQSR…QGEP, LTNG…CPSL, and GQDQ…PGGS. In terms of domain architecture, F-box spans 556-608; it reads QQYMACLPHHIIVKIFRLLPTLSLAILKCTCRYFKSIIEYYNIRPADSRWVRD.

As to quaternary structure, directly interacts with SKP1 and CUL1.

Its function is as follows. Substrate-recognition component of the SCF (SKP1-CUL1-F-box protein)-type E3 ubiquitin ligase complex. The chain is F-box only protein 34 (Fbxo34) from Mus musculus (Mouse).